Reading from the N-terminus, the 550-residue chain is Glucose-6-phosphate isomerase (550 aa).

Catalysis depends on Glu-357, which acts as the Proton donor. Active-site residues include His-388 and Lys-516.

The protein belongs to the GPI family.

Its subcellular location is the cytoplasm. The catalysed reaction is alpha-D-glucose 6-phosphate = beta-D-fructose 6-phosphate. Its pathway is carbohydrate biosynthesis; gluconeogenesis. It participates in carbohydrate degradation; glycolysis; D-glyceraldehyde 3-phosphate and glycerone phosphate from D-glucose: step 2/4. In terms of biological role, catalyzes the reversible isomerization of glucose-6-phosphate to fructose-6-phosphate. This Psychromonas ingrahamii (strain DSM 17664 / CCUG 51855 / 37) protein is Glucose-6-phosphate isomerase.